The chain runs to 390 residues: GTPase Obg (390 aa).

The Obg domain maps to 1–159 (MKFVDEATIL…RELMLELLLL (159 aa)). In terms of domain architecture, OBG-type G spans 160–333 (ADVGMLGLPN…LCWDVMNFLN (174 aa)). GTP-binding positions include 166-173 (GLPNAGKS), 191-195 (FTTLI), 213-216 (DIPG), 283-286 (NKID), and 314-316 (SAA). Residues serine 173 and threonine 193 each contribute to the Mg(2+) site. Residues 363–384 (EVEAEAESEDDDDWDEEDDDGV) are compositionally biased toward acidic residues. The tract at residues 363–390 (EVEAEAESEDDDDWDEEDDDGVEFIYER) is disordered.

It belongs to the TRAFAC class OBG-HflX-like GTPase superfamily. OBG GTPase family. Monomer. The cofactor is Mg(2+).

It localises to the cytoplasm. An essential GTPase which binds GTP, GDP and possibly (p)ppGpp with moderate affinity, with high nucleotide exchange rates and a fairly low GTP hydrolysis rate. Plays a role in control of the cell cycle, stress response, ribosome biogenesis and in those bacteria that undergo differentiation, in morphogenesis control. This is GTPase Obg from Yersinia enterocolitica serotype O:8 / biotype 1B (strain NCTC 13174 / 8081).